Reading from the N-terminus, the 146-residue chain is Endoribonuclease YbeY (146 aa).

Positions 108, 112, and 118 each coordinate Zn(2+).

It belongs to the endoribonuclease YbeY family. Zn(2+) serves as cofactor.

It localises to the cytoplasm. Functionally, single strand-specific metallo-endoribonuclease involved in late-stage 70S ribosome quality control and in maturation of the 3' terminus of the 16S rRNA. In Onion yellows phytoplasma (strain OY-M), this protein is Endoribonuclease YbeY.